The chain runs to 438 residues: Enolase (438 aa).

The substrate site is built by His159 and Glu168. The active-site Proton donor is Glu211. Asp246, Glu297, and Asp322 together coordinate Mg(2+). Substrate-binding residues include Glu297 and Asp322. The Proton acceptor role is filled by Lys347. Substrate contacts are provided by residues 374–377 (SHRS) and Lys398.

The protein belongs to the enolase family. In terms of assembly, homodimer. Mg(2+) is required as a cofactor.

It localises to the cytoplasm. It carries out the reaction (2R)-2-phosphoglycerate = phosphoenolpyruvate + H2O. It participates in carbohydrate degradation; glycolysis; pyruvate from D-glyceraldehyde 3-phosphate: step 4/5. The polypeptide is Enolase (enoA) (Penicillium citrinum).